We begin with the raw amino-acid sequence, 424 residues long: UDP-N-acetylglucosamine 1-carboxyvinyltransferase (424 aa).

Phosphoenolpyruvate is bound at residue 22–23 (KN). Arg93 is a UDP-N-acetyl-alpha-D-glucosamine binding site. The active-site Proton donor is the Cys117. Cys117 is subject to 2-(S-cysteinyl)pyruvic acid O-phosphothioketal. UDP-N-acetyl-alpha-D-glucosamine contacts are provided by residues 162–165 (KVSV), Asp307, and Ile329.

This sequence belongs to the EPSP synthase family. MurA subfamily.

The protein resides in the cytoplasm. The catalysed reaction is phosphoenolpyruvate + UDP-N-acetyl-alpha-D-glucosamine = UDP-N-acetyl-3-O-(1-carboxyvinyl)-alpha-D-glucosamine + phosphate. The protein operates within cell wall biogenesis; peptidoglycan biosynthesis. In terms of biological role, cell wall formation. Adds enolpyruvyl to UDP-N-acetylglucosamine. The protein is UDP-N-acetylglucosamine 1-carboxyvinyltransferase of Actinobacillus pleuropneumoniae serotype 5b (strain L20).